The following is a 178-amino-acid chain: MSVIRLHQYQVVGRALPTEKDEQPKIYRMKLWATNEVLAKSKFWYYLRRQKKVKKSNGQMLAINEIFEKNPTTIKNFGIWLRYQSRTGYHNMYKEYRDTTLNGAVEQMYTEMASRHRVRFPCIQIIKTATVPASLCKRESTKQFHNSKIKFPLVFRKVRPPTRKLKTTFKANKPNLFM.

This sequence belongs to the eukaryotic ribosomal protein eL20 family.

In Arabidopsis thaliana (Mouse-ear cress), this protein is Large ribosomal subunit protein eL20w (RPL18AD).